The primary structure comprises 273 residues: Dermonecrotic toxin LamSicTox-alphaIC1 (273 aa).

Residue His-5 is part of the active site. 2 residues coordinate Mg(2+): Glu-25 and Asp-27. The Nucleophile role is filled by His-41. 2 disulfide bridges follow: Cys-45–Cys-51 and Cys-47–Cys-190. Asp-85 serves as a coordination point for Mg(2+).

Belongs to the arthropod phospholipase D family. Class II subfamily. Requires Mg(2+) as cofactor. Expressed by the venom gland.

Its subcellular location is the secreted. It catalyses the reaction an N-(acyl)-sphingosylphosphocholine = an N-(acyl)-sphingosyl-1,3-cyclic phosphate + choline. The catalysed reaction is an N-(acyl)-sphingosylphosphoethanolamine = an N-(acyl)-sphingosyl-1,3-cyclic phosphate + ethanolamine. It carries out the reaction a 1-acyl-sn-glycero-3-phosphocholine = a 1-acyl-sn-glycero-2,3-cyclic phosphate + choline. The enzyme catalyses a 1-acyl-sn-glycero-3-phosphoethanolamine = a 1-acyl-sn-glycero-2,3-cyclic phosphate + ethanolamine. Functionally, dermonecrotic toxins cleave the phosphodiester linkage between the phosphate and headgroup of certain phospholipids (sphingolipid and lysolipid substrates), forming an alcohol (often choline) and a cyclic phosphate. This toxin acts on sphingomyelin (SM). It may also act on ceramide phosphoethanolamine (CPE), lysophosphatidylcholine (LPC) and lysophosphatidylethanolamine (LPE), but not on lysophosphatidylserine (LPS), and lysophosphatidylglycerol (LPG). It acts by transphosphatidylation, releasing exclusively cyclic phosphate products as second products. Induces dermonecrosis, hemolysis, increased vascular permeability, edema, inflammatory response, and platelet aggregation. This Loxosceles amazonica (Recluse spider) protein is Dermonecrotic toxin LamSicTox-alphaIC1.